Here is a 184-residue protein sequence, read N- to C-terminus: Rhox homeobox family member 1 (184 aa).

The segment at 26-104 (QLGAASSAEG…GPQPENMQPR (79 aa)) is disordered. A compositionally biased stretch (low complexity) spans 88 to 99 (PAQAAMEGPQPE). A DNA-binding region (homeobox) is located at residues 103-162 (PRTRRTKFTLLQVEELESVFRHTQYPDVPTRRELAENLGVTEDKVRVWFKNKRARCRRHQ). The short motif at 155-164 (RARCRRHQRE) is the Nuclear localization signal element.

This sequence belongs to the paired-like homeobox family. PEPP subfamily. In terms of assembly, does not interact with itself. Ovary, testis and epididymis. Also detected in the prostate and the mammary gland. Expressed in many tumor cell lines derived from acute lymphocytic leukemia, prostate, endometrial adenocarcinoma, melanoma, bladder carcinoma, colon carcinoma, erythroleukemia and breast carcinoma. Not expressed in placenta. In testis, mainly expressed in germ cells, but also detected in somatic cells such as Sertoli cells, Leydig cells and peritubular cells.

The protein localises to the nucleus. Transcription factor maybe involved in reproductive processes. Modulates expression of target genes encoding proteins involved in processes relevant to spermatogenesis. This chain is Rhox homeobox family member 1, found in Homo sapiens (Human).